We begin with the raw amino-acid sequence, 180 residues long: Cytokinin-beta-glucosidase (180 aa).

As to expression, accumulates in young leaves and shoot tips.

In terms of biological role, hydrolyzes cytokinin glucosides thus liberating free cytokinins. The protein is Cytokinin-beta-glucosidase (TROLC) of Nicotiana tabacum (Common tobacco).